A 1015-amino-acid polypeptide reads, in one-letter code: Beta-galactosidase (1015 aa).

Glutamate 434 acts as the Proton donor in catalysis. The Nucleophile role is filled by glutamate 513.

The protein belongs to the glycosyl hydrolase 2 family. Mg(2+) serves as cofactor. It depends on Mn(2+) as a cofactor.

It catalyses the reaction Hydrolysis of terminal non-reducing beta-D-galactose residues in beta-D-galactosides.. The chain is Beta-galactosidase (lacZ) from Arthrobacter sp. (strain B7).